Here is a 344-residue protein sequence, read N- to C-terminus: GLIPR1-like protein 2 (344 aa).

An SCP domain is found at 58–192 (VNLHNELRGD…IHAAIFICNY (135 aa)). The helical transmembrane segment at 254–274 (TFILLLRILCFILCVITVLIV) threads the bilayer. Composition is skewed to acidic residues over residues 292–304 (EESE…EEKE) and 312–334 (EMEM…EEET). Positions 292–344 (EESEAGNEEEEKEEEKKEKEEMEMEIMEMEEEKEEREEEEEETQKEKMEEEEK) are disordered. The segment covering 335 to 344 (QKEKMEEEEK) has biased composition (basic and acidic residues).

Belongs to the CRISP family. Highly expressed in testis. Detected in prostate, kidney, bladder, lung and bone marrow.

It is found in the membrane. This is GLIPR1-like protein 2 (GLIPR1L2) from Homo sapiens (Human).